The sequence spans 368 residues: 3-dehydroquinate synthase (368 aa).

Residues T131–T132, K144, and K153 each bind NAD(+). Residues E186, H249, and H267 each contribute to the Zn(2+) site.

This sequence belongs to the sugar phosphate cyclases superfamily. Dehydroquinate synthase family. The cofactor is Co(2+). Requires Zn(2+) as cofactor. NAD(+) is required as a cofactor.

It is found in the cytoplasm. It catalyses the reaction 7-phospho-2-dehydro-3-deoxy-D-arabino-heptonate = 3-dehydroquinate + phosphate. The protein operates within metabolic intermediate biosynthesis; chorismate biosynthesis; chorismate from D-erythrose 4-phosphate and phosphoenolpyruvate: step 2/7. Its function is as follows. Catalyzes the conversion of 3-deoxy-D-arabino-heptulosonate 7-phosphate (DAHP) to dehydroquinate (DHQ). The chain is 3-dehydroquinate synthase from Pelagibacter ubique (strain HTCC1062).